A 177-amino-acid polypeptide reads, in one-letter code: MSQREKKNQEAVYESESEFIEKLVAIKRTAKVVKGGSRFNFSAIVVVGDGKGSVGYGLGKAKEVPEAIRKATDQAQKQMIKVEIKDGRTIFHETIGRFGAGNVVLRPASAGTGIIAGGSMRPIFEAIGISDVLAKSTGTSNPHNLIKATFAALQNISPPKRVAAKRGLAAKNVRIRD.

In terms of domain architecture, S5 DRBM spans 19–82; that stretch reads FIEKLVAIKR…DQAQKQMIKV (64 aa).

It belongs to the universal ribosomal protein uS5 family. As to quaternary structure, part of the 30S ribosomal subunit. Contacts proteins S4 and S8.

Its function is as follows. With S4 and S12 plays an important role in translational accuracy. Functionally, located at the back of the 30S subunit body where it stabilizes the conformation of the head with respect to the body. In Magnetococcus marinus (strain ATCC BAA-1437 / JCM 17883 / MC-1), this protein is Small ribosomal subunit protein uS5.